The primary structure comprises 711 residues: Polyribonucleotide nucleotidyltransferase (711 aa).

Mg(2+) contacts are provided by Asp486 and Asp492. In terms of domain architecture, KH spans 553 to 612; sequence PRIHTIKINPDKIKDVIGKGGSVIRALTEETGTTIEIEDDGTVKIAATDGEKAKHAIRRI. Residues 622 to 690 form the S1 motif domain; it reads GRVYNGKVTR…RQGRIRLSIK (69 aa). Residues 689 to 711 form a disordered region; the sequence is IKEATEQSQPAAAPEAPAAEQGE. Low complexity predominate over residues 694–711; that stretch reads EQSQPAAAPEAPAAEQGE.

Belongs to the polyribonucleotide nucleotidyltransferase family. As to quaternary structure, component of the RNA degradosome, which is a multiprotein complex involved in RNA processing and mRNA degradation. Mg(2+) serves as cofactor.

The protein resides in the cytoplasm. The catalysed reaction is RNA(n+1) + phosphate = RNA(n) + a ribonucleoside 5'-diphosphate. Involved in mRNA degradation. Catalyzes the phosphorolysis of single-stranded polyribonucleotides processively in the 3'- to 5'-direction. This Escherichia coli O6:K15:H31 (strain 536 / UPEC) protein is Polyribonucleotide nucleotidyltransferase.